A 312-amino-acid polypeptide reads, in one-letter code: Methionyl-tRNA formyltransferase (312 aa).

Residue 110 to 113 (SLLP) coordinates (6S)-5,6,7,8-tetrahydrofolate.

The protein belongs to the Fmt family.

It carries out the reaction L-methionyl-tRNA(fMet) + (6R)-10-formyltetrahydrofolate = N-formyl-L-methionyl-tRNA(fMet) + (6S)-5,6,7,8-tetrahydrofolate + H(+). Its function is as follows. Attaches a formyl group to the free amino group of methionyl-tRNA(fMet). The formyl group appears to play a dual role in the initiator identity of N-formylmethionyl-tRNA by promoting its recognition by IF2 and preventing the misappropriation of this tRNA by the elongation apparatus. This Streptococcus suis (strain 05ZYH33) protein is Methionyl-tRNA formyltransferase.